Reading from the N-terminus, the 128-residue chain is Holin-like protein CidA (128 aa).

4 consecutive transmembrane segments (helical) span residues 4-24 (LLLTVIQIALLFIFARLINWV), 27-46 (ALHINIPGSIIGIVILFTLL), 59-79 (GAAWLLGELLLFFIPSAVGVI), and 88-108 (FGVSILLVVVISTFVVMVSTG).

Belongs to the CidA/LrgA family. CidA subfamily.

It localises to the cell membrane. Increases the activity of extracellular murein hydrolases possibly by mediating their export via hole formation. Inhibited by the antiholin-like proteins LrgAB. In an unstressed cell, the LrgAB products probably inhibit the function of the CidA protein. When a cell is stressed by the addition of antibiotics or by other factors in the environment, CidA possibly oligomerizes within the bacterial cell membrane, creating lesions that disrupt the proton motive force, which in turn results in loss of cell viability. These lesions are also hypothesized to regulate the subsequent cell lysis by either allowing the murein hydrolases access to the cell wall substrate and/or regulating their activity by a possible change in the cell wall pH that results from loss of membrane potential. This chain is Holin-like protein CidA, found in Bacillus velezensis (strain DSM 23117 / BGSC 10A6 / LMG 26770 / FZB42) (Bacillus amyloliquefaciens subsp. plantarum).